We begin with the raw amino-acid sequence, 246 residues long: Probable transcriptional regulatory protein SPO1072 (246 aa).

The tract at residues 1 to 22 (MAGHSKWANIQHRKGRQDAARS) is disordered.

This sequence belongs to the TACO1 family.

The protein resides in the cytoplasm. This chain is Probable transcriptional regulatory protein SPO1072, found in Ruegeria pomeroyi (strain ATCC 700808 / DSM 15171 / DSS-3) (Silicibacter pomeroyi).